The primary structure comprises 191 residues: Putative inactive glutathione hydrolase 4 (191 aa).

T54 acts as the Nucleophile in catalysis. L-glutamate-binding positions include T72, N74, E93, D96, 126–127 (SS), and 147–148 (GG).

This sequence belongs to the gamma-glutamyltransferase family. Expressed at low levels in embryo, roots and leaves. In mature plants, expression is restricted to vascular tissues of roots, leaves, flowers and siliques.

The polypeptide is Putative inactive glutathione hydrolase 4 (GGT4) (Arabidopsis thaliana (Mouse-ear cress)).